A 296-amino-acid chain; its full sequence is NADPH-dependent 1-acyldihydroxyacetone phosphate reductase (296 aa).

Ile-9 lines the NADP(+) pocket. Residues Gly-11–Gly-15 carry the GXSXG motif. Thr-35, Arg-41, Asp-56, Asn-84, Lys-117, Tyr-148, Lys-152, Val-181, and Thr-183 together coordinate NADP(+). Tyr-148 functions as the Proton donor in the catalytic mechanism. Catalysis depends on Lys-152, which acts as the Lowers pKa of active site Tyr.

The protein belongs to the short-chain dehydrogenases/reductases (SDR) family.

It is found in the lipid droplet. Its subcellular location is the cytoplasm. The protein localises to the vacuole. The protein resides in the endoplasmic reticulum. It localises to the golgi apparatus. It is found in the mitochondrion outer membrane. The enzyme catalyses 1-hexadecanoyl-sn-glycero-3-phosphate + NADP(+) = 1-hexadecanoylglycerone 3-phosphate + NADPH + H(+). The catalysed reaction is a 1-acylglycerone 3-phosphate + NADPH + H(+) = a 1-acyl-sn-glycero-3-phosphate + NADP(+). It carries out the reaction a triacylglycerol + H2O = a diacylglycerol + a fatty acid + H(+). Functionally, can convert acyl and alkyl dihydroxyacetone-phosphate (DHAP) into glycerolipids and ether lipids, respectively. Required for the biosynthesis of phosphatidic acid via the DHAP pathway, where it reduces 1-acyl DHAP to lysophosphatidic acid (LPA). Also has triacylglycerol (TAG) lipase activity. Involved in the mobilization of the non-polar storage lipids triacylglycerols (TAGs) from lipid particles by hydrolysis of TAGs. Lipolysis of TAG by AYR1 is essential for starvation-induced autophagy. Forms an NADPH-regulated cation-selective channel in the mitochondrial outer membrane. The protein is NADPH-dependent 1-acyldihydroxyacetone phosphate reductase (ayr1) of Schizosaccharomyces pombe (strain 972 / ATCC 24843) (Fission yeast).